The primary structure comprises 172 residues: Envelope protein UL45 (172 aa).

At 1 to 27 (MPLRASEHAYRPLGPGTPPMRARLPAA) the chain is on the intravirion side. The helical; Signal-anchor for type II membrane protein transmembrane segment at 28-48 (AWVGVGTIIGGVVIIAALVLV) threads the bilayer. The Virion surface portion of the chain corresponds to 49 to 172 (PSRASWALSP…TSTRNALGLP (124 aa)).

It belongs to the herpesviridae HHV-1 UL45 family.

Its subcellular location is the virion membrane. Functionally, important virulence factor of HSV neurotropism. Seems to be required for glycoprotein B-induced fusion. Dispensable for growth in vitro. The sequence is that of Envelope protein UL45 from Human herpesvirus 1 (strain 17) (HHV-1).